Consider the following 290-residue polypeptide: Coiled-coil domain-containing protein 137 (290 aa).

Disordered regions lie at residues 1 to 92 (MARP…EAQV), 98 to 117 (LEKEAKGEEPDIAVPKFKQR), 139 to 181 (LSKN…EARA), and 269 to 290 (RQEMTPAQPPGSSFQRQGHACL). Low complexity predominate over residues 20-39 (SGQPQGRRQQQAQGQQRSAS). Over residues 56–79 (KNQDEQEIPFRLREIMRSRQEMKK) the composition is skewed to basic and acidic residues. Residues 66–89 (RLREIMRSRQEMKKTLSNKKRKKE) are a coiled coil. The span at 154–163 (PKKEKSERKK) shows a compositional bias: basic and acidic residues. A coiled-coil region spans residues 155–192 (KKEKSERKKAFQKRRLEKAQRKREARAVDRLEQELLKD). The segment covering 164–178 (AFQKRRLEKAQRKRE) has biased composition (basic residues).

It is found in the chromosome. This chain is Coiled-coil domain-containing protein 137 (Ccdc137), found in Mus musculus (Mouse).